We begin with the raw amino-acid sequence, 340 residues long: Beta-D-galactofuranosidase xynD (340 aa).

Positions 1 to 24 are cleaved as a signal peptide; it reads MKHHNYYPSTCLSILPFLLPLTMS. Aspartate 51 acts as the Proton acceptor in catalysis. Asparagine 96 and asparagine 165 each carry an N-linked (GlcNAc...) asparagine glycan. The Proton donor role is filled by glutamate 222. N-linked (GlcNAc...) asparagine glycans are attached at residues asparagine 302 and asparagine 328.

This sequence belongs to the glycosyl hydrolase 43 family.

It localises to the secreted. It functions in the pathway glycan degradation. Glycoside hydrolase family 43 beta-D-galactofuranosidase involved in the degradation of beta-galactofuranoside (Galf)-containing glycans such as galactomannan or O-glycans. Is not active on beta-1,5- or beta-1,6-linked beta-D-galactofuranose (Galf) residues. In Aspergillus niger (strain ATCC MYA-4892 / CBS 513.88 / FGSC A1513), this protein is Beta-D-galactofuranosidase xynD.